The following is a 186-amino-acid chain: Peptidyl-tRNA hydrolase (186 aa).

Residue Y14 coordinates tRNA. The Proton acceptor role is filled by H19. TRNA-binding residues include Y64, N66, and N112.

The protein belongs to the PTH family. As to quaternary structure, monomer.

The protein resides in the cytoplasm. It carries out the reaction an N-acyl-L-alpha-aminoacyl-tRNA + H2O = an N-acyl-L-amino acid + a tRNA + H(+). Its function is as follows. Hydrolyzes ribosome-free peptidyl-tRNAs (with 1 or more amino acids incorporated), which drop off the ribosome during protein synthesis, or as a result of ribosome stalling. Functionally, catalyzes the release of premature peptidyl moieties from peptidyl-tRNA molecules trapped in stalled 50S ribosomal subunits, and thus maintains levels of free tRNAs and 50S ribosomes. This Bacillus cytotoxicus (strain DSM 22905 / CIP 110041 / 391-98 / NVH 391-98) protein is Peptidyl-tRNA hydrolase.